The sequence spans 227 residues: Cytidylate kinase (227 aa).

Residue 12–20 (GPSGAGKGT) participates in ATP binding.

It belongs to the cytidylate kinase family. Type 1 subfamily.

The protein resides in the cytoplasm. It carries out the reaction CMP + ATP = CDP + ADP. The enzyme catalyses dCMP + ATP = dCDP + ADP. This is Cytidylate kinase from Salmonella choleraesuis (strain SC-B67).